Here is a 333-residue protein sequence, read N- to C-terminus: Ketol-acid reductoisomerase (NADP(+)) (333 aa).

One can recognise a KARI N-terminal Rossmann domain in the interval 6 to 186 (TRVYTECDAD…GALRAGAIQT (181 aa)). NADP(+)-binding positions include 29-32 (YGSQ), Lys-52, Ser-55, Ser-57, and 87-90 (DPAQ). His-112 is a catalytic residue. Residue Gly-138 participates in NADP(+) binding. The region spanning 187–332 (TFTEETETDL…ARLRALFSWS (146 aa)) is the KARI C-terminal knotted domain. Positions 195, 199, 231, and 235 each coordinate Mg(2+). Residue Ser-256 participates in substrate binding.

Belongs to the ketol-acid reductoisomerase family. Mg(2+) is required as a cofactor.

It catalyses the reaction (2R)-2,3-dihydroxy-3-methylbutanoate + NADP(+) = (2S)-2-acetolactate + NADPH + H(+). The catalysed reaction is (2R,3R)-2,3-dihydroxy-3-methylpentanoate + NADP(+) = (S)-2-ethyl-2-hydroxy-3-oxobutanoate + NADPH + H(+). It participates in amino-acid biosynthesis; L-isoleucine biosynthesis; L-isoleucine from 2-oxobutanoate: step 2/4. It functions in the pathway amino-acid biosynthesis; L-valine biosynthesis; L-valine from pyruvate: step 2/4. Functionally, involved in the biosynthesis of branched-chain amino acids (BCAA). Catalyzes an alkyl-migration followed by a ketol-acid reduction of (S)-2-acetolactate (S2AL) to yield (R)-2,3-dihydroxy-isovalerate. In the isomerase reaction, S2AL is rearranged via a Mg-dependent methyl migration to produce 3-hydroxy-3-methyl-2-ketobutyrate (HMKB). In the reductase reaction, this 2-ketoacid undergoes a metal-dependent reduction by NADPH to yield (R)-2,3-dihydroxy-isovalerate. The protein is Ketol-acid reductoisomerase (NADP(+)) of Tropheryma whipplei (strain TW08/27) (Whipple's bacillus).